The following is a 124-amino-acid chain: Ribonuclease P protein component 2 (124 aa).

The protein belongs to the eukaryotic/archaeal RNase P protein component 2 family. In terms of assembly, consists of a catalytic RNA component and at least 4-5 protein subunits.

Its subcellular location is the cytoplasm. It carries out the reaction Endonucleolytic cleavage of RNA, removing 5'-extranucleotides from tRNA precursor.. In terms of biological role, part of ribonuclease P, a protein complex that generates mature tRNA molecules by cleaving their 5'-ends. The sequence is that of Ribonuclease P protein component 2 from Methanothermobacter thermautotrophicus (strain ATCC 29096 / DSM 1053 / JCM 10044 / NBRC 100330 / Delta H) (Methanobacterium thermoautotrophicum).